Here is a 199-residue protein sequence, read N- to C-terminus: MTSRRKLILASQSPRRRELLAMTGIPFETASVEIDETFDPALTVEKNVMAISKQKAEAVMWTLPQDAGEAIVLGSDTTVVLDGAALGKPGDADHAFEMLSALQGRSHEVLTGFCILHDGKAITDYARTIVEIGAMTPGEITRYIEVMKPFDKAGSYGIQDPLLACFVTGIDGCYYNVVGLPVSKVYAALKPLFPLDANR.

The Proton acceptor role is filled by Asp76.

Belongs to the Maf family. YhdE subfamily. Requires a divalent metal cation as cofactor.

It localises to the cytoplasm. It catalyses the reaction dTTP + H2O = dTMP + diphosphate + H(+). It carries out the reaction UTP + H2O = UMP + diphosphate + H(+). In terms of biological role, nucleoside triphosphate pyrophosphatase that hydrolyzes dTTP and UTP. May have a dual role in cell division arrest and in preventing the incorporation of modified nucleotides into cellular nucleic acids. The chain is dTTP/UTP pyrophosphatase from Chlorobaculum parvum (strain DSM 263 / NCIMB 8327) (Chlorobium vibrioforme subsp. thiosulfatophilum).